The chain runs to 495 residues: 3-octaprenyl-4-hydroxybenzoate carboxy-lyase (495 aa).

N172 provides a ligand contact to Mn(2+). Residues 175 to 177 (IYR), 189 to 191 (RWL), and 194 to 195 (RG) contribute to the prenylated FMN site. A Mn(2+)-binding site is contributed by E238. The Proton donor role is filled by D287.

It belongs to the UbiD family. In terms of assembly, homohexamer. The cofactor is prenylated FMN. Mn(2+) serves as cofactor.

It is found in the cell membrane. The catalysed reaction is a 4-hydroxy-3-(all-trans-polyprenyl)benzoate + H(+) = a 2-(all-trans-polyprenyl)phenol + CO2. It functions in the pathway cofactor biosynthesis; ubiquinone biosynthesis. Its function is as follows. Catalyzes the decarboxylation of 3-octaprenyl-4-hydroxy benzoate to 2-octaprenylphenol, an intermediate step in ubiquinone biosynthesis. This is 3-octaprenyl-4-hydroxybenzoate carboxy-lyase from Edwardsiella ictaluri (strain 93-146).